We begin with the raw amino-acid sequence, 67 residues long: Probable Sec-independent protein translocase protein TatE (67 aa).

The helical transmembrane segment at 4–21 (ISITKLLVVAALVVLLFG) threads the bilayer.

This sequence belongs to the TatA/E family. TatE subfamily.

It localises to the cell inner membrane. In terms of biological role, part of the twin-arginine translocation (Tat) system that transports large folded proteins containing a characteristic twin-arginine motif in their signal peptide across membranes. TatE shares overlapping functions with TatA. The chain is Probable Sec-independent protein translocase protein TatE from Salmonella dublin (strain CT_02021853).